Consider the following 251-residue polypeptide: DNA repair protein RecO (251 aa).

The protein belongs to the RecO family.

Functionally, involved in DNA repair and RecF pathway recombination. This Nitratidesulfovibrio vulgaris (strain ATCC 29579 / DSM 644 / CCUG 34227 / NCIMB 8303 / VKM B-1760 / Hildenborough) (Desulfovibrio vulgaris) protein is DNA repair protein RecO.